Reading from the N-terminus, the 284-residue chain is Putative cysteine-rich repeat secretory protein 7 (284 aa).

The signal sequence occupies residues 1–24 (MARIILTAPLFYFFFSLLSHQTMS). Gnk2-homologous domains are found at residues 26–128 (PQHM…NVSF) and 134–244 (SKPV…TFVL). Residues 247–284 (PAPSPSSLPPISPTSSPPLSLPPQLPPPLSQPPPPLST) form a disordered region.

This sequence belongs to the cysteine-rich repeat secretory protein family.

It is found in the secreted. The protein is Putative cysteine-rich repeat secretory protein 7 (CRRSP7) of Arabidopsis thaliana (Mouse-ear cress).